The following is a 238-amino-acid chain: DNA damage-regulated autophagy modulator protein 1 (238 aa).

Transmembrane regions (helical) follow at residues 9 to 29 (AFVP…SYVV), 53 to 73 (SGIF…TMYT), 91 to 111 (VFNL…GIVA), 116 to 136 (LAVP…GVVY), 161 to 181 (MAIS…ASLI), and 200 to 220 (VSAI…LTFI).

The protein belongs to the DRAM/TMEM150 family.

It localises to the lysosome membrane. Its function is as follows. Lysosomal modulator of autophagy that plays a central role in p53/TP53-mediated apoptosis. Not involved in p73/TP73-mediated autophagy. In Mus musculus (Mouse), this protein is DNA damage-regulated autophagy modulator protein 1 (Dram1).